The sequence spans 337 residues: Putative NAC domain-containing protein 94 (337 aa).

In terms of domain architecture, NAC spans 20-191; it reads VLPGFRFHPT…AWAICRIFKK (172 aa).

The protein localises to the nucleus. The sequence is that of Putative NAC domain-containing protein 94 (ANAC094) from Arabidopsis thaliana (Mouse-ear cress).